Consider the following 275-residue polypeptide: 3',5'-cyclic adenosine monophosphate phosphodiesterase CpdA (275 aa).

7 residues coordinate Fe cation: D22, H24, D64, N94, H164, H203, and H205. Residues H24, D64, and 94–95 (NH) contribute to the AMP site. Position 205 (H205) interacts with AMP.

It belongs to the cyclic nucleotide phosphodiesterase class-III family. Fe(2+) serves as cofactor.

It carries out the reaction 3',5'-cyclic AMP + H2O = AMP + H(+). Hydrolyzes cAMP to 5'-AMP. Plays an important regulatory role in modulating the intracellular concentration of cAMP, thereby influencing cAMP-dependent processes. The polypeptide is 3',5'-cyclic adenosine monophosphate phosphodiesterase CpdA (Escherichia coli O157:H7).